The chain runs to 398 residues: Phosphoglycerate kinase (398 aa).

Residues 23-25 (DFN), Arg38, 61-64 (HMGK), Arg122, and Arg155 each bind substrate. ATP contacts are provided by residues Lys206, Gly297, Glu328, and 354 to 357 (GGDS).

This sequence belongs to the phosphoglycerate kinase family. Monomer.

The protein resides in the cytoplasm. It carries out the reaction (2R)-3-phosphoglycerate + ATP = (2R)-3-phospho-glyceroyl phosphate + ADP. It functions in the pathway carbohydrate degradation; glycolysis; pyruvate from D-glyceraldehyde 3-phosphate: step 2/5. This chain is Phosphoglycerate kinase, found in Clostridium botulinum (strain Okra / Type B1).